The chain runs to 368 residues: DNA replication and repair protein RecF (368 aa).

30-37 contributes to the ATP binding site; it reads GNNAQGKT.

This sequence belongs to the RecF family.

The protein localises to the cytoplasm. Functionally, the RecF protein is involved in DNA metabolism; it is required for DNA replication and normal SOS inducibility. RecF binds preferentially to single-stranded, linear DNA. It also seems to bind ATP. This Streptococcus pyogenes serotype M5 (strain Manfredo) protein is DNA replication and repair protein RecF.